The following is a 1167-amino-acid chain: Integrin alpha-E (1167 aa).

The signal sequence occupies residues 1 to 19; that stretch reads MKWLFHTLLCMASLKPQGA. Over 20 to 1114 the chain is Extracellular; that stretch reads FNLDVDWAWV…IFLKEEETRS (1095 aa). FG-GAP repeat units follow at residues 27-81 and 84-142; these read AWVT…PDEI and QPVE…LQAQ. N51 is a glycosylation site (N-linked (GlcNAc...) asparagine). Cystine bridges form between C72–C83 and C130–C164. The X-domain (extra domain) stretch occupies residues 149 to 192; it reads EGFLDPGAHVDSGDYCRSKGGSTGEEKKSARRRRTVEEEDEEED. The disordered stretch occupies residues 163 to 191; it reads YCRSKGGSTGEEKKSARRRRTVEEEDEEE. Residues 193–382 enclose the VWFA domain; the sequence is GTEIAIVLDG…SKLQQHIVHM (190 aa). N-linked (GlcNAc...) asparagine glycosylation is found at N256, N314, N341, N364, N418, and N437. The FG-GAP 3 repeat unit spans residues 383–435; sequence EGTVGDALQYQLAQTGFSAQILDKGQVLLGTVGAFNWSGGALLYSTQNGRGCF. FG-GAP repeat units follow at residues 438–491, 492–552, 555–619, and 623–683; these read QTAK…REED, AFVR…DASF, AHTL…GLYD, and QQIR…FTPD. Ca(2+)-binding residues include D514, D516, D518, D522, D578, N580, D582, D586, D646, N648, D650, and D654. C698 and C754 are joined by a disulfide. N-linked (GlcNAc...) asparagine glycans are attached at residues N718 and N773. A disulfide bridge connects residues C814 and C820. 2 N-linked (GlcNAc...) asparagine glycosylation sites follow: N829 and N846. An intrachain disulfide couples C884 to C898. N-linked (GlcNAc...) asparagine glycans are attached at residues N911, N925, N968, and N1013. 2 cysteine pairs are disulfide-bonded: C998–C1023 and C1031–C1047. Residues N1055 and N1086 are each glycosylated (N-linked (GlcNAc...) asparagine). Residues 1115-1137 form a helical membrane-spanning segment; it reads LPLIIGSSIGGLLVLVVIIAILF. Over 1138-1167 the chain is Cytoplasmic; that stretch reads KCGFFKRKYQQLNLESTRRAQLKADSLLQD. Residues 1140–1144 carry the GFFKR motif motif; it reads GFFKR.

Belongs to the integrin alpha chain family. Heterodimer of an alpha and a beta subunit. The alpha subunit is composed of a heavy and a light chains linked by a disulfide bond. Alpha-E associates with beta-7.

Its subcellular location is the membrane. Functionally, integrin alpha-E/beta-7 is a receptor for E-cadherin. It mediates adhesion of intra-epithelial T-lymphocytes to epithelial cell monolayers. Mice expressing a null mutation of the alpha-E subunit gene exhibit a marked reduction in the numbers of intraepithelial lymphocytes in the gut and in the development of gut-associated lymphoid aggregates, supporting a specific role for this integrin in mediating retention of lymphocytes in the intestinal wall. In Mus musculus (Mouse), this protein is Integrin alpha-E (Itgae).